A 168-amino-acid polypeptide reads, in one-letter code: Small ribosomal subunit protein uS5c (168 aa).

The S5 DRBM domain maps to 17–80; that stretch reads WSERVIQITR…SDCKKQIIEF (64 aa).

This sequence belongs to the universal ribosomal protein uS5 family. Part of the 30S ribosomal subunit. Contacts protein S4.

It localises to the plastid. It is found in the chloroplast. Functionally, with S4 and S12 plays an important role in translational accuracy. This chain is Small ribosomal subunit protein uS5c (rps5), found in Cyanidium caldarium (Red alga).